A 208-amino-acid chain; its full sequence is Small ribosomal subunit protein uS4 (208 aa).

Residues 98 to 161 form the S4 RNA-binding domain; the sequence is TRLDNTVYRL…RKIPVIAEAQ (64 aa).

It belongs to the universal ribosomal protein uS4 family. In terms of assembly, part of the 30S ribosomal subunit. Contacts protein S5. The interaction surface between S4 and S5 is involved in control of translational fidelity.

One of the primary rRNA binding proteins, it binds directly to 16S rRNA where it nucleates assembly of the body of the 30S subunit. Its function is as follows. With S5 and S12 plays an important role in translational accuracy. This is Small ribosomal subunit protein uS4 from Maridesulfovibrio salexigens (strain ATCC 14822 / DSM 2638 / NCIMB 8403 / VKM B-1763) (Desulfovibrio salexigens).